The primary structure comprises 365 residues: Chorismate synthase (365 aa).

Residues R48 and R54 each coordinate NADP(+). Residues 125–127 (RSS), 237–238 (NA), G277, 292–296 (KPTSS), and R318 each bind FMN.

Belongs to the chorismate synthase family. As to quaternary structure, homotetramer. Requires FMNH2 as cofactor.

It catalyses the reaction 5-O-(1-carboxyvinyl)-3-phosphoshikimate = chorismate + phosphate. Its pathway is metabolic intermediate biosynthesis; chorismate biosynthesis; chorismate from D-erythrose 4-phosphate and phosphoenolpyruvate: step 7/7. Functionally, catalyzes the anti-1,4-elimination of the C-3 phosphate and the C-6 proR hydrogen from 5-enolpyruvylshikimate-3-phosphate (EPSP) to yield chorismate, which is the branch point compound that serves as the starting substrate for the three terminal pathways of aromatic amino acid biosynthesis. This reaction introduces a second double bond into the aromatic ring system. The chain is Chorismate synthase from Verminephrobacter eiseniae (strain EF01-2).